A 293-amino-acid chain; its full sequence is Cell division protein FtsQ (293 aa).

At 1–29 (MSQVRSKSQQGKRQAKPQEVVPATILTEQ) the chain is on the cytoplasmic side. A helical membrane pass occupies residues 30–52 (LSTYAFGTVTAGAVMVAVAAWMG). The Periplasmic portion of the chain corresponds to 53–293 (GSLASIDERI…SQIDDKSGGA (241 aa)). One can recognise a POTRA domain in the interval 75–144 (FTVTKISIEG…NDIWILAENR (70 aa)).

It belongs to the FtsQ/DivIB family. FtsQ subfamily.

Its subcellular location is the cell inner membrane. Its function is as follows. Essential cell division protein. This is Cell division protein FtsQ from Hirschia baltica (strain ATCC 49814 / DSM 5838 / IFAM 1418).